We begin with the raw amino-acid sequence, 193 residues long: dTTP/UTP pyrophosphatase (193 aa).

Asp70 acts as the Proton acceptor in catalysis.

The protein belongs to the Maf family. YhdE subfamily. A divalent metal cation is required as a cofactor.

It is found in the cytoplasm. It carries out the reaction dTTP + H2O = dTMP + diphosphate + H(+). The catalysed reaction is UTP + H2O = UMP + diphosphate + H(+). Functionally, nucleoside triphosphate pyrophosphatase that hydrolyzes dTTP and UTP. May have a dual role in cell division arrest and in preventing the incorporation of modified nucleotides into cellular nucleic acids. This chain is dTTP/UTP pyrophosphatase, found in Alcanivorax borkumensis (strain ATCC 700651 / DSM 11573 / NCIMB 13689 / SK2).